The primary structure comprises 455 residues: Argininosuccinate lyase (455 aa).

The protein belongs to the lyase 1 family. Argininosuccinate lyase subfamily.

The protein localises to the cytoplasm. It carries out the reaction 2-(N(omega)-L-arginino)succinate = fumarate + L-arginine. Its pathway is amino-acid biosynthesis; L-arginine biosynthesis; L-arginine from L-ornithine and carbamoyl phosphate: step 3/3. This Shewanella oneidensis (strain ATCC 700550 / JCM 31522 / CIP 106686 / LMG 19005 / NCIMB 14063 / MR-1) protein is Argininosuccinate lyase.